The chain runs to 203 residues: Histidine biosynthesis bifunctional protein HisIE (203 aa).

A phosphoribosyl-AMP cyclohydrolase region spans residues 1 to 114 (MLTEQQRREL…FGDTAHQWLF (114 aa)). A phosphoribosyl-ATP pyrophosphohydrolase region spans residues 115–203 (LYQLEQLLAE…VIENLRKRHQ (89 aa)).

This sequence in the N-terminal section; belongs to the PRA-CH family. The protein in the C-terminal section; belongs to the PRA-PH family.

The protein resides in the cytoplasm. It carries out the reaction 1-(5-phospho-beta-D-ribosyl)-ATP + H2O = 1-(5-phospho-beta-D-ribosyl)-5'-AMP + diphosphate + H(+). The enzyme catalyses 1-(5-phospho-beta-D-ribosyl)-5'-AMP + H2O = 1-(5-phospho-beta-D-ribosyl)-5-[(5-phospho-beta-D-ribosylamino)methylideneamino]imidazole-4-carboxamide. It functions in the pathway amino-acid biosynthesis; L-histidine biosynthesis; L-histidine from 5-phospho-alpha-D-ribose 1-diphosphate: step 2/9. It participates in amino-acid biosynthesis; L-histidine biosynthesis; L-histidine from 5-phospho-alpha-D-ribose 1-diphosphate: step 3/9. The protein is Histidine biosynthesis bifunctional protein HisIE of Escherichia coli O6:H1 (strain CFT073 / ATCC 700928 / UPEC).